The following is a 771-amino-acid chain: Myotubularin-related protein 10 (771 aa).

The Myotubularin phosphatase domain occupies 217–657 (FETYSDWDRE…THIKLWKLCY (441 aa)). Residues S603 and S745 each carry the phosphoserine modification.

Belongs to the protein-tyrosine phosphatase family. Non-receptor class myotubularin subfamily.

This chain is Myotubularin-related protein 10 (Mtmr10), found in Mus musculus (Mouse).